Consider the following 525-residue polypeptide: Packaging protein UL32 homolog (525 aa).

Positions 1–12 (MAHKVTSANEPN) are enriched in polar residues. Residues 1 to 20 (MAHKVTSANEPNPLTGKRLS) form a disordered region. Residues Cys95, Cys98, His173, Cys179, Cys255, Cys256, Cys357, Cys360, His427, Cys434, Cys473, and His510 each contribute to the Zn(2+) site. Zinc finger regions lie at residues 95-179 (CRVC…ICRC), 255-510 (CCHL…LRIH), and 357-434 (CPLC…DPLC).

It belongs to the herpesviridae UL32 protein family.

The protein localises to the host cytoplasm. It is found in the host nucleus. Functionally, plays a role in efficient localization of neo-synthesized capsids to nuclear replication compartments, thereby controlling cleavage and packaging of virus genomic DNA. This is Packaging protein UL32 homolog from Epstein-Barr virus (strain B95-8) (HHV-4).